We begin with the raw amino-acid sequence, 341 residues long: Biotin synthase (341 aa).

In terms of domain architecture, Radical SAM core spans 53–272 (NHVETASLLS…IAVARIMMPK (220 aa)). [4Fe-4S] cluster-binding residues include Cys-68, Cys-72, and Cys-75. The [2Fe-2S] cluster site is built by Cys-112, Cys-143, Cys-203, and Arg-276.

Belongs to the radical SAM superfamily. Biotin synthase family. Homodimer. The cofactor is [4Fe-4S] cluster. Requires [2Fe-2S] cluster as cofactor.

The enzyme catalyses (4R,5S)-dethiobiotin + (sulfur carrier)-SH + 2 reduced [2Fe-2S]-[ferredoxin] + 2 S-adenosyl-L-methionine = (sulfur carrier)-H + biotin + 2 5'-deoxyadenosine + 2 L-methionine + 2 oxidized [2Fe-2S]-[ferredoxin]. It functions in the pathway cofactor biosynthesis; biotin biosynthesis; biotin from 7,8-diaminononanoate: step 2/2. Functionally, catalyzes the conversion of dethiobiotin (DTB) to biotin by the insertion of a sulfur atom into dethiobiotin via a radical-based mechanism. In Nitrobacter winogradskyi (strain ATCC 25391 / DSM 10237 / CIP 104748 / NCIMB 11846 / Nb-255), this protein is Biotin synthase.